The primary structure comprises 494 residues: Glycosyl hydrolase family 109 protein (494 aa).

A disordered region spans residues 1–32 (MNDDARPAPEPQDIPPHSGAADEVNRQDPSRR). Positions 1 to 58 (MNDDARPAPEPQDIPPHSGAADEVNRQDPSRRSVLWTTAGVAGAGLGLGALGAGTASA) form a signal peptide, tat-type signal. Residues 104-105 (NR), D126, 175-178 (WELH), 195-196 (EC), and N224 each bind NAD(+). Residues Y253, R272, 284–287 (YPNH), and Y366 contribute to the substrate site. Residue Y284 coordinates NAD(+).

The protein belongs to the Gfo/Idh/MocA family. Glycosyl hydrolase 109 subfamily. Requires NAD(+) as cofactor. Post-translationally, predicted to be exported by the Tat system. The position of the signal peptide cleavage has not been experimentally proven.

In terms of biological role, glycosidase. The protein is Glycosyl hydrolase family 109 protein of Streptomyces filamentosus (Streptomyces roseosporus).